A 271-amino-acid chain; its full sequence is Shikimate dehydrogenase (NADP(+)) (271 aa).

Shikimate contacts are provided by residues 14–16 (SKS) and Thr61. The Proton acceptor role is filled by Lys65. Shikimate is bound by residues Asn86 and Asp102. Residues 126 to 130 (GAGGA), 149 to 154 (NRTFSR), and Met213 each bind NADP(+). Tyr215 contributes to the shikimate binding site. NADP(+) is bound at residue Gly238.

This sequence belongs to the shikimate dehydrogenase family. Homodimer.

The catalysed reaction is shikimate + NADP(+) = 3-dehydroshikimate + NADPH + H(+). The protein operates within metabolic intermediate biosynthesis; chorismate biosynthesis; chorismate from D-erythrose 4-phosphate and phosphoenolpyruvate: step 4/7. Involved in the biosynthesis of the chorismate, which leads to the biosynthesis of aromatic amino acids. Catalyzes the reversible NADPH linked reduction of 3-dehydroshikimate (DHSA) to yield shikimate (SA). In Histophilus somni (strain 2336) (Haemophilus somnus), this protein is Shikimate dehydrogenase (NADP(+)).